The sequence spans 235 residues: MSSERQLAGRIVVPGEPLPEEVEASPPYVIDYKGVKRATVVGLLREKGDGGGRAFVKLKEIYVPQAGDVVIGLIQSVGIMNWFVDINSPYVAVLSVQDFLGRPFNPAVDDMQSLLKVGDYIKAKVVAFDKTRSPLLTVQGEGLGRIVRGKIVEISPAKVPRVIGRKMSMLKTLEEKTECKIFVARNGRIHLECPNEDLEAIAVMAIKIIDEEAYTSGLTKRIIKFIEEERRIREV.

Residues 67–139 enclose the S1 motif domain; the sequence is GDVVIGLIQS…KTRSPLLTVQ (73 aa). The region spanning 149–205 is the KH domain; sequence GKIVEISPAKVPRVIGRKMSMLKTLEEKTECKIFVARNGRIHLECPNEDLEAIAVMA.

The protein belongs to the RRP4 family. In terms of assembly, component of the archaeal exosome complex. Forms a trimer of Rrp4 and/or Csl4 subunits. The trimer associates with a hexameric ring-like arrangement composed of 3 Rrp41-Rrp42 heterodimers.

The protein resides in the cytoplasm. Functionally, non-catalytic component of the exosome, which is a complex involved in RNA degradation. Increases the RNA binding and the efficiency of RNA degradation. Confers strong poly(A) specificity to the exosome. The chain is Exosome complex component Rrp4 from Aeropyrum pernix (strain ATCC 700893 / DSM 11879 / JCM 9820 / NBRC 100138 / K1).